The following is a 358-amino-acid chain: Ganglioside-induced differentiation-associated protein 1 (358 aa).

The region spanning 24–105 (VKLILYHWTH…YLEQTFLDEK (82 aa)) is the GST N-terminal domain. Residues K50, K172, K173, K188, and K190 each participate in a glycyl lysine isopeptide (Lys-Gly) (interchain with G-Cter in ubiquitin) cross-link. Residues 153 to 309 (PAYATTRIRS…LISAVLPTAF (157 aa)) enclose the GST C-terminal domain. K203 carries the post-translational modification N6-acetyllysine; alternate. K203 is covalently cross-linked (Glycyl lysine isopeptide (Lys-Gly) (interchain with G-Cter in ubiquitin); alternate). Residues K206, K207, and K214 each participate in a glycyl lysine isopeptide (Lys-Gly) (interchain with G-Cter in ubiquitin) cross-link. 2 helical membrane passes run 292–312 (VLGH…FRVA) and 320–340 (LGTT…FMLF). Residues 320–358 (LGTTLVVGLLAGMGYFAFMLFRKRLGSMILALRPRPNYF) form a required for mitochondrial localization region.

The protein belongs to the GST superfamily. As to quaternary structure, homodimer. In terms of processing, ubiquitinated by PRKN during mitophagy, leading to its degradation and enhancement of mitophagy. Deubiquitinated by USP30.

It is found in the mitochondrion outer membrane. It localises to the cytoplasm. In terms of biological role, regulates the mitochondrial network by promoting mitochondrial fission. In Bos taurus (Bovine), this protein is Ganglioside-induced differentiation-associated protein 1 (GDAP1).